The chain runs to 72 residues: General transcription and DNA repair factor IIH subunit TFB5 (72 aa).

This sequence belongs to the TFB5 family. In terms of assembly, component of the 7-subunit TFIIH core complex composed of XPB/SSL2, XPD/RAD3, SSL1, TFB1, TFB2, TFB4 and TFB5, which is active in NER. The core complex associates with the 3-subunit CTD-kinase module TFIIK composed of CCL1, KIN28 and TFB3 to form the 10-subunit holoenzyme (holo-TFIIH) active in transcription. An additionnal subunit, TFB6, plays a role in the dissociation of the SSL2 helicase from TFIIH after transcription initiation. Interacts with TFB2.

The protein resides in the nucleus. Its function is as follows. Component of the general transcription and DNA repair factor IIH (TFIIH) core complex, which is involved in general and transcription-coupled nucleotide excision repair (NER) of damaged DNA and, when complexed to TFIIK, in RNA transcription by RNA polymerase II. In NER, TFIIH acts by opening DNA around the lesion to allow the excision of the damaged oligonucleotide and its replacement by a new DNA fragment. In transcription, TFIIH has an essential role in transcription initiation. When the pre-initiation complex (PIC) has been established, TFIIH is required for promoter opening and promoter escape. Phosphorylation of the C-terminal tail (CTD) of the largest subunit of RNA polymerase II by the kinase module TFIIK controls the initiation of transcription. TFB5 is required for stable recruitment of TFIIH to a promoter, but not for stability of TFIIH subunits. This chain is General transcription and DNA repair factor IIH subunit TFB5 (TFB5), found in Saccharomyces cerevisiae (strain ATCC 204508 / S288c) (Baker's yeast).